Reading from the N-terminus, the 1393-residue chain is MLVQFQQLLLLLISIIKLCQADDNDNSFFQPVSQPSLNYKDTGNRIGLLGSFDALSFYSFVNSSQIVNDPDTSVSIFQKKRDVSNSSSSSTSFSNSLYLQDITNNYSLKFADINGQVNQLFKISNDSVVLNGNFTSFNNQSVISPIIFTISSREVTKIFSDDINGSVKTIFLDNDLIYLGGNFKFNNTYSAAVYNITAKKVHSTPFQGFGPNSSINSIAKVLNGDKEKEDNEEELGSILFGGQFDTLGLSDLLVHNITSNNTKKHNTSNTSIISAEQLISLRHGTFTSVNGESSEEDAAAIVCPSDNKEWAAQKNSGAEWKVELPDEMKGIHPTKARIYIPEGPNGIKLFRIYSYPNNGIMNLTYIDPATNELAYCDAWCPLLNYDDLNDHVDNNILNATELNENNSVFVDEQDGSYFQYYDPSTKTKNLGYASNFQEFAFVDNVGVDTVGVTIIDWYGDQGILAGFELYQNAITVYGNDSLNDPNCQSDASDDTNNNAVINSGSFKSVQSINPAITNTDYLVTSDTNAKITLYPNISYSGNYSIIMMTPGCAYDGSCARRAIVNVTVVGDDNDVLSTKTIYQNNENNKFDYLFYGHLNGSKTSTSSNRIEISYMGTVTEGVQDPYMVVDKVIANIVSLDNYYDKNSTNHTRNNTGYELAPIKLNGLFEYSLANFSQFDEQLVHYKRNNKTYISLNNTFVGNSSINLLSGELSNQSRIDQISLGPKQQDGNKQSLLLLGKFESDSKNITLSNNNLITLTIDSYNNTLNETNIELPSRLTKRDTQTILGGNFNNSITRLIELPGCFLAIGDFALSGKDGSSSIKDLSNNNQSVSSANNFALYSDDQWYSFGNDYTSNDFNQFTNLTLDSVEYYVFSGNGQFRTWDNDNFKWVTDPTKQLNLTQAAQINDHQQILGGTGFSTMQFQSVDQAYIADGNFSKFGIDVIANKSFMISNSYYVNSSLSVIGGKFETKDVKNVGLISNSDPNNTISALQGSIVWGDNTLIQSLYVDSSDEYLFMGVNGSVQINEQTNVTGIVIYDLVNNTFTSFQPAELSHSNGDPISVNSMVLFDKGNKLLVGGDFDLAGSLSCPSLCVYDITNTRWINPQNDATTTQSIGGVVTDMKFFQSNQVLITGNGLQLNGNSGIKFLIYNFNSNSFSVKDSLNKIDQTVEKFILNDENNKNLDGRMIAFGEKSISGFDGSNWQRIDSDIIYENFTKFNDMKLLTLDKPSDYNQTYFDKSQIFTIAGVFRLKDYGLVNMALFNGTSWIPYVFTSLQQQKSTGSGSGSGSGSRSSSLQIGQIQSILIDDSYRFQSSDDLKKTNKNLSRGKVVGISLACALGSTTLLGLLYIIPYFALFKNRKDGYFQPERIHEDEMMDAVNPEDLLHEIDLQREK.

A signal peptide spans 1-21 (MLVQFQQLLLLLISIIKLCQA). The Extracellular segment spans residues 22–1329 (DDNDNSFFQP…TNKNLSRGKV (1308 aa)). N62, N85, N105, N125, N133, N139, N164, N186, N195, N212, N256, N260, N266, N269, N362, N398, N405, N479, N536, N542, N565, N599, N646, N649, N653, N674, N689, N696, N702, N714, N747, N764, N768, N792, N829, N863, N899, N935, N946, N958, N985, N1020, N1030, N1041, N1213, N1232, N1262, and N1323 each carry an N-linked (GlcNAc...) asparagine glycan. Residues 1330–1350 (VGISLACALGSTTLLGLLYII) traverse the membrane as a helical segment. Over 1351-1393 (PYFALFKNRKDGYFQPERIHEDEMMDAVNPEDLLHEIDLQREK) the chain is Cytoplasmic.

This sequence belongs to the RAX2 family.

It localises to the cell membrane. The protein localises to the cell tip. In terms of biological role, required for establishing sites of emergence of yeast and hyphal daughters and for maintaining the linearity of hyphal growth, but not involved in responses that require a reorientation of the direction of already established hyphal growth (tropisms). Does not play a role in penetration or injury of human epithelial cells. In Candida albicans (strain SC5314 / ATCC MYA-2876) (Yeast), this protein is Polarized growth protein RAX2.